Consider the following 595-residue polypeptide: Aspartate--tRNA ligase (595 aa).

E176 is a binding site for L-aspartate. Residues 200-203 (QIFK) form an aspartate region. R222 serves as a coordination point for L-aspartate. ATP contacts are provided by residues 222 to 224 (RDE) and Q231. H450 lines the L-aspartate pocket. E484 is a binding site for ATP. R491 lines the L-aspartate pocket. Position 536–539 (536–539 (GLDR)) interacts with ATP.

The protein belongs to the class-II aminoacyl-tRNA synthetase family. Type 1 subfamily. As to quaternary structure, homodimer.

The protein localises to the cytoplasm. It catalyses the reaction tRNA(Asp) + L-aspartate + ATP = L-aspartyl-tRNA(Asp) + AMP + diphosphate. In terms of biological role, catalyzes the attachment of L-aspartate to tRNA(Asp) in a two-step reaction: L-aspartate is first activated by ATP to form Asp-AMP and then transferred to the acceptor end of tRNA(Asp). This is Aspartate--tRNA ligase from Halalkalibacterium halodurans (strain ATCC BAA-125 / DSM 18197 / FERM 7344 / JCM 9153 / C-125) (Bacillus halodurans).